Consider the following 144-residue polypeptide: Grifin (144 aa).

A Galectin domain is found at 5–133 (FEAFCAGGLA…EHRLAQVELA (129 aa)). Phosphoserine is present on serine 138.

In terms of assembly, homodimer.

This chain is Grifin (Grifin), found in Mus musculus (Mouse).